The chain runs to 438 residues: sn-glycerol-3-phosphate-binding periplasmic protein UgpB (438 aa).

A signal peptide spans 1–23 (MISLRHTALGLALSLAFTGQALA). Sn-glycerol 3-phosphate contacts are provided by Tyr65, Glu89, Ser144, Ser270, Gly307, Tyr346, and Arg397.

The protein belongs to the bacterial solute-binding protein 1 family. In terms of assembly, the complex is composed of two ATP-binding proteins (UgpC), two transmembrane proteins (UgpA and UgpE) and a solute-binding protein (UgpB).

The protein localises to the periplasm. In terms of biological role, part of the ABC transporter complex UgpBAEC involved in sn-glycerol-3-phosphate (G3P) import. Binds G3P. The protein is sn-glycerol-3-phosphate-binding periplasmic protein UgpB (ugpB) of Salmonella typhi.